The following is a 368-amino-acid chain: UDP-N-acetylglucosamine--N-acetylmuramyl-(pentapeptide) pyrophosphoryl-undecaprenol N-acetylglucosamine transferase (368 aa).

Residues 10–12 (TGG), N128, R170, S199, I250, and Q295 each bind UDP-N-acetyl-alpha-D-glucosamine.

This sequence belongs to the glycosyltransferase 28 family. MurG subfamily.

The protein resides in the cell inner membrane. The catalysed reaction is di-trans,octa-cis-undecaprenyl diphospho-N-acetyl-alpha-D-muramoyl-L-alanyl-D-glutamyl-meso-2,6-diaminopimeloyl-D-alanyl-D-alanine + UDP-N-acetyl-alpha-D-glucosamine = di-trans,octa-cis-undecaprenyl diphospho-[N-acetyl-alpha-D-glucosaminyl-(1-&gt;4)]-N-acetyl-alpha-D-muramoyl-L-alanyl-D-glutamyl-meso-2,6-diaminopimeloyl-D-alanyl-D-alanine + UDP + H(+). Its pathway is cell wall biogenesis; peptidoglycan biosynthesis. Functionally, cell wall formation. Catalyzes the transfer of a GlcNAc subunit on undecaprenyl-pyrophosphoryl-MurNAc-pentapeptide (lipid intermediate I) to form undecaprenyl-pyrophosphoryl-MurNAc-(pentapeptide)GlcNAc (lipid intermediate II). The chain is UDP-N-acetylglucosamine--N-acetylmuramyl-(pentapeptide) pyrophosphoryl-undecaprenol N-acetylglucosamine transferase from Chlorobium phaeovibrioides (strain DSM 265 / 1930) (Prosthecochloris vibrioformis (strain DSM 265)).